The sequence spans 270 residues: Urease accessory protein UreD (270 aa).

The protein belongs to the UreD family. As to quaternary structure, ureD, UreF and UreG form a complex that acts as a GTP-hydrolysis-dependent molecular chaperone, activating the urease apoprotein by helping to assemble the nickel containing metallocenter of UreC. The complex may form in the order UreABCD, UreABCDF, UreABCDFG. The UreE protein probably delivers the nickel in a GTPase-dependent fashion.

The protein localises to the cytoplasm. Functionally, necessary for the functional incorporation of the urease nickel metallocenter. In Klebsiella aerogenes (Enterobacter aerogenes), this protein is Urease accessory protein UreD.